Reading from the N-terminus, the 146-residue chain is Large ribosomal subunit protein mL41 (146 aa).

A mitochondrion-targeting transit peptide spans 1 to 16 (MKGSPISQFSKTSINA).

The protein belongs to the mitochondrion-specific ribosomal protein mL41 family. As to quaternary structure, component of the mitochondrial large ribosomal subunit (mt-LSU). Mature yeast 74S mitochondrial ribosomes consist of a small (37S) and a large (54S) subunit. The 37S small subunit contains a 15S ribosomal RNA (15S mt-rRNA) and 34 different proteins. The 54S large subunit contains a 21S rRNA (21S mt-rRNA) and 46 different proteins.

Its subcellular location is the mitochondrion. Component of the mitochondrial ribosome (mitoribosome), a dedicated translation machinery responsible for the synthesis of mitochondrial genome-encoded proteins, including at least some of the essential transmembrane subunits of the mitochondrial respiratory chain. The mitoribosomes are attached to the mitochondrial inner membrane and translation products are cotranslationally integrated into the membrane. The protein is Large ribosomal subunit protein mL41 (MRPL27) of Saccharomyces cerevisiae (strain ATCC 204508 / S288c) (Baker's yeast).